A 303-amino-acid chain; its full sequence is Ribonuclease Z (303 aa).

Positions 61, 63, 65, 66, 138, 206, and 265 each coordinate Zn(2+). The active-site Proton acceptor is D65.

The protein belongs to the RNase Z family. In terms of assembly, homodimer. Zn(2+) is required as a cofactor.

The catalysed reaction is Endonucleolytic cleavage of RNA, removing extra 3' nucleotides from tRNA precursor, generating 3' termini of tRNAs. A 3'-hydroxy group is left at the tRNA terminus and a 5'-phosphoryl group is left at the trailer molecule.. In terms of biological role, zinc phosphodiesterase, which displays some tRNA 3'-processing endonuclease activity. Probably involved in tRNA maturation, by removing a 3'-trailer from precursor tRNA. This is Ribonuclease Z from Agathobacter rectalis (strain ATCC 33656 / DSM 3377 / JCM 17463 / KCTC 5835 / VPI 0990) (Eubacterium rectale).